A 518-amino-acid polypeptide reads, in one-letter code: E3 ubiquitin-protein ligase TRIM39 (518 aa).

Residues 29–70 form an RING-type zinc finger; sequence CSVCLEYLKEPVIIECGHNFCKACITRWWEDLERDFPCPVCR. A B box-type zinc finger spans residues 102 to 143; the sequence is RDESLCPQHHEALSLFCYEDQEAVCLICAISHTHRAHTVVPL. 4 residues coordinate Zn(2+): C107, H110, C129, and H135. Residues 181–250 are a coiled coil; it reads ELKRLVESRR…AHLAAEVEGK (70 aa). 2 interaction with CDKN1A regions span residues 268–337 and 389–518; these read KNIP…QLIA and TSGR…TDWE. Residues 319-514 enclose the B30.2/SPRY domain; the sequence is SNFPRQYFAL…NAAPLTIRPP (196 aa).

Belongs to the TRIM/RBCC family. As to quaternary structure, interacts with MOAP1. Interacts with CDKN1A. Autoubiquitinated.

It localises to the cytoplasm. The protein resides in the cytosol. The protein localises to the mitochondrion. Its subcellular location is the nucleus. It carries out the reaction S-ubiquitinyl-[E2 ubiquitin-conjugating enzyme]-L-cysteine + [acceptor protein]-L-lysine = [E2 ubiquitin-conjugating enzyme]-L-cysteine + N(6)-ubiquitinyl-[acceptor protein]-L-lysine.. It functions in the pathway protein modification; protein ubiquitination. In terms of biological role, E3 ubiquitin-protein ligase. May facilitate apoptosis by inhibiting APC/C-Cdh1-mediated poly-ubiquitination and subsequent proteasome-mediated degradation of the pro-apoptotic protein MOAP1. Regulates the G1/S transition of the cell cycle and DNA damage-induced G2 arrest by stabilizing CDKN1A/p21. Positively regulates CDKN1A/p21 stability by competing with DTL for CDKN1A/p21 binding, therefore disrupting DCX(DTL) E3 ubiquitin ligase complex-mediated CDKN1A/p21 ubiquitination and degradation. The protein is E3 ubiquitin-protein ligase TRIM39 (TRIM39) of Pan troglodytes (Chimpanzee).